The primary structure comprises 210 residues: Vacuolar protein sorting-associated protein 28 homolog 2 (210 aa).

Residues 1-99 (MMEVKLWNDK…VTSGLPATVE (99 aa)) enclose the VPS28 N-terminal domain. The VPS28 C-terminal domain occupies 109-205 (SNSASIVAEC…SSYNSFMAAL (97 aa)).

The protein belongs to the VPS28 family. In terms of assembly, component of the endosomal sorting required for transport complex I (ESCRT-I), composed of ELC, VPS28 and VPS37. Interacts with ELC.

The protein localises to the endosome. Functionally, component of the ESCRT-I complex (endosomal sorting complex required for transport I), a regulator of vesicular trafficking process. Required for the sorting of endocytic ubiquitinated cargos into multivesicular bodies (MVBs). Mediates the association to the ESCRT-0 complex. The polypeptide is Vacuolar protein sorting-associated protein 28 homolog 2 (VPS28-2) (Arabidopsis thaliana (Mouse-ear cress)).